The primary structure comprises 211 residues: tRNA (guanine-N(7)-)-methyltransferase (211 aa).

Glutamate 43, aspartate 68, asparagine 95, and asparagine 117 together coordinate S-adenosyl-L-methionine. Lysine 121 serves as a coordination point for substrate. The interval 123 to 128 (RHNKRR) is interaction with RNA. Residues aspartate 153 and 190-193 (TEYE) contribute to the substrate site.

This sequence belongs to the class I-like SAM-binding methyltransferase superfamily. TrmB family.

The enzyme catalyses guanosine(46) in tRNA + S-adenosyl-L-methionine = N(7)-methylguanosine(46) in tRNA + S-adenosyl-L-homocysteine. It participates in tRNA modification; N(7)-methylguanine-tRNA biosynthesis. In terms of biological role, catalyzes the formation of N(7)-methylguanine at position 46 (m7G46) in tRNA. In Clostridium tetani (strain Massachusetts / E88), this protein is tRNA (guanine-N(7)-)-methyltransferase.